A 204-amino-acid chain; its full sequence is uncharacterized protein (204 aa).

Positions phenylalanine 118–proline 169 are disordered.

This is an uncharacterized protein from Encephalitozoon cuniculi (strain GB-M1) (Microsporidian parasite).